An 85-amino-acid chain; its full sequence is Dr hemagglutinin AFA-III operon regulatory protein AfaF (85 aa).

The protein to E.coli PapI and DaaF.

Functionally, may have a possible regulatory function on the expression of the other AFA-III genes. This chain is Dr hemagglutinin AFA-III operon regulatory protein AfaF (afaF), found in Escherichia coli.